The following is a 160-amino-acid chain: Probable cyclic pyranopterin monophosphate synthase (160 aa).

Residues 1–12 are compositionally biased toward basic and acidic residues; that stretch reads MSDDSELTHVTD. Positions 1-24 are disordered; that stretch reads MSDDSELTHVTDDGDAQMVDVGEK. Substrate-binding positions include 78 to 80 and 114 to 115; these read MCH and ME. The active site involves Asp129.

The protein belongs to the MoaC family. In terms of assembly, homohexamer; trimer of dimers.

It catalyses the reaction (8S)-3',8-cyclo-7,8-dihydroguanosine 5'-triphosphate = cyclic pyranopterin phosphate + diphosphate. It functions in the pathway cofactor biosynthesis; molybdopterin biosynthesis. In terms of biological role, catalyzes the conversion of (8S)-3',8-cyclo-7,8-dihydroguanosine 5'-triphosphate to cyclic pyranopterin monophosphate (cPMP). This is Probable cyclic pyranopterin monophosphate synthase from Natronomonas pharaonis (strain ATCC 35678 / DSM 2160 / CIP 103997 / JCM 8858 / NBRC 14720 / NCIMB 2260 / Gabara) (Halobacterium pharaonis).